A 137-amino-acid polypeptide reads, in one-letter code: Histone H2B.1, sperm (137 aa).

A disordered region spans residues 1-43 (MPSQKSPTKRSPTKRSPQKGGKGAKRGGKAGKRRRGVAVKRRR). Short sequence motifs (SPKK motif) lie at residues 6–9 (SPTK), 11–14 (SPTK), and 16–19 (SPQK). The segment covering 7-43 (PTKRSPTKRSPQKGGKGAKRGGKAGKRRRGVAVKRRR) has biased composition (basic residues). 2 positions are modified to phosphoserine: Ser11 and Ser16. An O-linked (GlcNAc) serine glycan is attached at Ser124. Residue Lys132 forms a Glycyl lysine isopeptide (Lys-Gly) (interchain with G-Cter in ubiquitin) linkage.

This sequence belongs to the histone H2B family. As to quaternary structure, the nucleosome is a histone octamer containing two molecules each of H2A, H2B, H3 and H4 assembled in one H3-H4 heterotetramer and two H2A-H2B heterodimers. The octamer wraps approximately 147 bp of DNA. Post-translationally, monoubiquitination of Lys-132 gives a specific tag for epigenetic transcriptional activation and is also prerequisite for histone H3 'Lys-4' and 'Lys-79' methylation. In terms of processing, phosphorylated on SPKK motifs 2 and 3; which may regulate DNA binding. Dephosphorylated during maturation of spermatids to mature sperm and rephosphorylated at fertilization. GlcNAcylation at Ser-124 promotes monoubiquitination of Lys-132. It fluctuates in response to extracellular glucose, and associates with transcribed genes.

It localises to the nucleus. It is found in the chromosome. Functionally, core component of nucleosome. Nucleosomes wrap and compact DNA into chromatin, limiting DNA accessibility to the cellular machineries which require DNA as a template. Histones thereby play a central role in transcription regulation, DNA repair, DNA replication and chromosomal stability. DNA accessibility is regulated via a complex set of post-translational modifications of histones, also called histone code, and nucleosome remodeling. The protein is Histone H2B.1, sperm of Psammechinus miliaris (Green sea urchin).